Consider the following 200-residue polypeptide: NAD(P)H-dependent FMN reductase C4B3.06c (200 aa).

FMN contacts are provided by residues arginine 22, 96–99, and tyrosine 126; that span reads QYNG.

In terms of assembly, homodimer.

The protein localises to the cytoplasm. It localises to the nucleus. It carries out the reaction FMNH2 + NADP(+) = FMN + NADPH + 2 H(+). It catalyses the reaction FMNH2 + NAD(+) = FMN + NADH + 2 H(+). Functionally, has several reductase activities that are NAD(P)H-dependent and involve FMN as a cofactor. May be involved in ferric iron assimilation. In Schizosaccharomyces pombe (strain 972 / ATCC 24843) (Fission yeast), this protein is NAD(P)H-dependent FMN reductase C4B3.06c.